We begin with the raw amino-acid sequence, 268 residues long: Tryptophan synthase alpha chain (268 aa).

Active-site proton acceptor residues include Glu-49 and Asp-60.

This sequence belongs to the TrpA family. In terms of assembly, tetramer of two alpha and two beta chains.

The catalysed reaction is (1S,2R)-1-C-(indol-3-yl)glycerol 3-phosphate + L-serine = D-glyceraldehyde 3-phosphate + L-tryptophan + H2O. It participates in amino-acid biosynthesis; L-tryptophan biosynthesis; L-tryptophan from chorismate: step 5/5. Its function is as follows. The alpha subunit is responsible for the aldol cleavage of indoleglycerol phosphate to indole and glyceraldehyde 3-phosphate. In Escherichia coli (strain 55989 / EAEC), this protein is Tryptophan synthase alpha chain.